We begin with the raw amino-acid sequence, 60 residues long: MDLKVTLIKSVAHRLPKQRKIVKALGLGKVNSTVVLPDNAATRGALLKIAHLISVEEVNK.

Belongs to the universal ribosomal protein uL30 family. Part of the 50S ribosomal subunit.

In Lactobacillus johnsonii (strain CNCM I-12250 / La1 / NCC 533), this protein is Large ribosomal subunit protein uL30.